The sequence spans 363 residues: Cellular tumor antigen p53 (363 aa).

The transcription activation (acidic) stretch occupies residues 1 to 29 (MEPSSETGMDPPLSQETFEDLWSLLPDPL). The DNA-binding element occupies 76–267 (DYAGKYGLQL…RTEEDNYTKK (192 aa)). Zn(2+)-binding residues include Cys-150, His-153, Cys-213, and Cys-217. The tract at residues 248-255 (RVCACPGR) is interaction with DNA. A disordered region spans residues 257 to 290 (RRTEEDNYTKKRGLKPSGKRELAHPPSSEPPLPK). A Bipartite nuclear localization signal motif is present at residues 275-292 (KRELAHPPSSEPPLPKKR). The oligomerization stretch occupies residues 300–331 (EEIFTLRIKGRSRYEMIKKLNDALELQESLDQ). Positions 314–325 (EMIKKLNDALEL) match the Nuclear export signal motif. The tract at residues 344 to 356 (EIKPKKGKKLLVK) is basic (repression of DNA-binding).

The protein belongs to the p53 family. In terms of assembly, binds DNA as a homotetramer. Zn(2+) serves as cofactor. In terms of tissue distribution, ubiquitous.

It is found in the cytoplasm. Its subcellular location is the nucleus. Functionally, multifunctional transcription factor that induces cell cycle arrest, DNA repair or apoptosis upon binding to its target DNA sequence. Acts as a tumor suppressor in many tumor types; induces growth arrest or apoptosis depending on the physiological circumstances and cell type. Negatively regulates cell division by controlling expression of a set of genes required for this process. One of the activated genes is an inhibitor of cyclin-dependent kinases. Apoptosis induction seems to be mediated either by stimulation of BAX and FAS antigen expression, or by repression of Bcl-2 expression. In Xenopus laevis (African clawed frog), this protein is Cellular tumor antigen p53 (tp53).